We begin with the raw amino-acid sequence, 482 residues long: Probable cytosol aminopeptidase (482 aa).

Positions 251 and 256 each coordinate Mn(2+). The active site involves Lys-263. Residues Asp-274, Asp-333, and Glu-335 each contribute to the Mn(2+) site. Arg-337 is an active-site residue.

Belongs to the peptidase M17 family. Mn(2+) is required as a cofactor.

The protein resides in the cytoplasm. It catalyses the reaction Release of an N-terminal amino acid, Xaa-|-Yaa-, in which Xaa is preferably Leu, but may be other amino acids including Pro although not Arg or Lys, and Yaa may be Pro. Amino acid amides and methyl esters are also readily hydrolyzed, but rates on arylamides are exceedingly low.. It carries out the reaction Release of an N-terminal amino acid, preferentially leucine, but not glutamic or aspartic acids.. Presumably involved in the processing and regular turnover of intracellular proteins. Catalyzes the removal of unsubstituted N-terminal amino acids from various peptides. In Acinetobacter baumannii (strain SDF), this protein is Probable cytosol aminopeptidase.